A 435-amino-acid polypeptide reads, in one-letter code: Adenylosuccinate synthetase (435 aa).

GTP contacts are provided by residues 19–25 (GDEGKGK) and 49–51 (GHT). The active-site Proton acceptor is the Asp20. Mg(2+) is bound by residues Asp20 and Gly49. Residues 20 to 23 (DEGK), 47 to 50 (NAGH), Thr139, Arg153, Asn233, Thr248, and Arg312 contribute to the IMP site. His50 serves as the catalytic Proton donor. A substrate-binding site is contributed by 308–314 (VTTGRKR). GTP-binding positions include Arg314, 340 to 342 (KLD), and 422 to 424 (GVG).

It belongs to the adenylosuccinate synthetase family. Homodimer. It depends on Mg(2+) as a cofactor.

The protein localises to the cytoplasm. The enzyme catalyses IMP + L-aspartate + GTP = N(6)-(1,2-dicarboxyethyl)-AMP + GDP + phosphate + 2 H(+). It functions in the pathway purine metabolism; AMP biosynthesis via de novo pathway; AMP from IMP: step 1/2. In terms of biological role, plays an important role in the de novo pathway and in the salvage pathway of purine nucleotide biosynthesis. Catalyzes the first committed step in the biosynthesis of AMP from IMP. The polypeptide is Adenylosuccinate synthetase (Brugia malayi (Filarial nematode worm)).